The chain runs to 652 residues: MSTAPSPGTTPSPSPPSPPTNSTTTTPPPAASSPPPTTTPSSPPPSPSTNSTSPPPSSPLPPSLPPPSPPGSLTPPLPQPSPSAPITPSPPSPTTPSNPRSPPSPNQGPPNTPSGSTPRTPSNTKPSPPSDSSDGLSTGVVVGIAIGGVAILVILTLICLLCKKKRRRRHDDEAAYYVPPPPPSGPKAGGPYGGQQQYWQQQNASRPSDNHVVTSLPPPKPPSPPRKPPPPPPPPAFMSSSGGSDYSDLPVLPPPSPGLVLGFSKSTFTYEELSRATNGFSEANLLGQGGFGYVHKGILPSGKEVAVKQLKAGSGQGEREFQAEVEIISRVHHRHLVSLIGYCMAGVQRLLVYEFVPNNNLEFHLHGKGRPTMEWSTRLKIALGSAKGLSYLHEDCNPKIIHRDIKASNILIDFKFEAKVADFGLAKIASDTNTHVSTRVMGTFGYLAPEYAASGKLTEKSDVFSFGVVLLELITGRRPVDANNVYVDDSLVDWARPLLNRASEEGDFEGLADSKMGNEYDREEMARMVACAAACVRHSARRRPRMSQIVRALEGNVSLSDLNEGMRPGHSNVYSSYGGSTDYDTSQYNDDMIKFRKMALGTQEYGTTGEYSNPTSDYGLYPSGSSSEGQATREMEMGKIKKTGQGYSGPSL.

The disordered stretch occupies residues 1-137 (MSTAPSPGTT…PPSDSSDGLS (137 aa)). Residues 1-139 (MSTAPSPGTT…SDSSDGLSTG (139 aa)) are Extracellular-facing. The segment covering 8–19 (GTTPSPSPPSPP) has biased composition (pro residues). N-linked (GlcNAc...) asparagine glycans are attached at residues asparagine 21 and asparagine 50. Over residues 26 to 112 (TPPPAASSPP…PSPNQGPPNT (87 aa)) the composition is skewed to pro residues. Residues 113-137 (PSGSTPRTPSNTKPSPPSDSSDGLS) are compositionally biased toward low complexity. The helical transmembrane segment at 140 to 160 (VVVGIAIGGVAILVILTLICL) threads the bilayer. The Cytoplasmic segment spans residues 161-652 (LCKKKRRRRH…TGQGYSGPSL (492 aa)). The segment at 169–251 (RHDDEAAYYV…GGSDYSDLPV (83 aa)) is disordered. Positions 203–213 (NASRPSDNHVV) are enriched in polar residues. Residues 216–236 (LPPPKPPSPPRKPPPPPPPPA) are compositionally biased toward pro residues. Threonine 269 is subject to Phosphothreonine. Residues 280–559 (FSEANLLGQG…VRALEGNVSL (280 aa)) form the Protein kinase domain. Residues 286-294 (LGQGGFGYV) and lysine 308 contribute to the ATP site. Residue tyrosine 353 is modified to Phosphotyrosine. Catalysis depends on aspartate 404, which acts as the Proton acceptor. Phosphoserine occurs at positions 408 and 437. Phosphothreonine occurs at positions 438 and 443. Tyrosine 451 is subject to Phosphotyrosine. Over residues 605-616 (YGTTGEYSNPTS) the composition is skewed to polar residues. The disordered stretch occupies residues 605–652 (YGTTGEYSNPTSDYGLYPSGSSSEGQATREMEMGKIKKTGQGYSGPSL).

The protein belongs to the protein kinase superfamily. Ser/Thr protein kinase family. Mostly expressed in inflorescence bolt, flower buds and siliques, and, to a lower extent, in roots, seedlings and leaves.

It is found in the cell membrane. It catalyses the reaction L-seryl-[protein] + ATP = O-phospho-L-seryl-[protein] + ADP + H(+). The enzyme catalyses L-threonyl-[protein] + ATP = O-phospho-L-threonyl-[protein] + ADP + H(+). The polypeptide is Proline-rich receptor-like protein kinase PERK1 (PERK1) (Arabidopsis thaliana (Mouse-ear cress)).